Here is a 495-residue protein sequence, read N- to C-terminus: Glycerol kinase (495 aa).

T13 contacts ADP. ATP-binding residues include T13, T14, and S15. T13 serves as a coordination point for sn-glycerol 3-phosphate. Position 17 (R17) interacts with ADP. Positions 83, 84, 135, and 244 each coordinate sn-glycerol 3-phosphate. R83, E84, Y135, D244, and Q245 together coordinate glycerol. The ADP site is built by T266 and G309. Positions 266, 309, 313, and 410 each coordinate ATP. ADP-binding residues include G410 and N414.

This sequence belongs to the FGGY kinase family.

The enzyme catalyses glycerol + ATP = sn-glycerol 3-phosphate + ADP + H(+). Its pathway is polyol metabolism; glycerol degradation via glycerol kinase pathway; sn-glycerol 3-phosphate from glycerol: step 1/1. Inhibited by fructose 1,6-bisphosphate (FBP). In terms of biological role, key enzyme in the regulation of glycerol uptake and metabolism. Catalyzes the phosphorylation of glycerol to yield sn-glycerol 3-phosphate. The protein is Glycerol kinase of Shewanella amazonensis (strain ATCC BAA-1098 / SB2B).